Reading from the N-terminus, the 136-residue chain is Organic hydroperoxide resistance protein OhrB (136 aa).

Belongs to the OsmC/Ohr family.

Its function is as follows. Involved in organic hydroperoxide resistance. In Bacillus subtilis (strain 168), this protein is Organic hydroperoxide resistance protein OhrB (ohrB).